The chain runs to 421 residues: ATP-dependent RNA helicase RhlB (421 aa).

The short motif at 9–37 (QKFSDFALHPKVVEALEKKGFHNCTPIQA) is the Q motif element. Residues 40 to 219 (LPLTLAGRDV…FEQMNNAEYI (180 aa)) form the Helicase ATP-binding domain. 53-60 (AQTGTGKT) contributes to the ATP binding site. The short motif at 165 to 168 (DEAD) is the DEAD box element. Residues 245–390 (RLLQTLIEEE…VSKYNPDALM (146 aa)) enclose the Helicase C-terminal domain. The disordered stretch occupies residues 392–421 (DLPKPLRLTRPRTGNGPRRTGAPRNRRRSG). The span at 402–414 (PRTGNGPRRTGAP) shows a compositional bias: low complexity.

The protein belongs to the DEAD box helicase family. RhlB subfamily. Component of the RNA degradosome, which is a multiprotein complex involved in RNA processing and mRNA degradation.

It is found in the cytoplasm. It catalyses the reaction ATP + H2O = ADP + phosphate + H(+). Functionally, DEAD-box RNA helicase involved in RNA degradation. Has RNA-dependent ATPase activity and unwinds double-stranded RNA. The sequence is that of ATP-dependent RNA helicase RhlB from Escherichia coli O157:H7 (strain EC4115 / EHEC).